Here is a 318-residue protein sequence, read N- to C-terminus: Protein-methionine-sulfoxide reductase catalytic subunit MsrP (318 aa).

A signal peptide (tat-type signal) is located at residues 1 to 40 (MKQLMMSDVTPEEIFNQRRQIIKSMGLGIATLGLPNIAFA). Mo-molybdopterin-binding positions include asparagine 72, 75–76 (YE), cysteine 130, threonine 165, asparagine 217, arginine 222, and 233–235 (SIK).

The protein belongs to the MsrP family. As to quaternary structure, heterodimer of a catalytic subunit (MsrP) and a heme-binding subunit (MsrQ). Mo-molybdopterin serves as cofactor. Predicted to be exported by the Tat system. The position of the signal peptide cleavage has not been experimentally proven.

Its subcellular location is the periplasm. It carries out the reaction L-methionyl-[protein] + a quinone + H2O = L-methionyl-(S)-S-oxide-[protein] + a quinol. The catalysed reaction is L-methionyl-[protein] + a quinone + H2O = L-methionyl-(R)-S-oxide-[protein] + a quinol. Part of the MsrPQ system that repairs oxidized periplasmic proteins containing methionine sulfoxide residues (Met-O), using respiratory chain electrons. Thus protects these proteins from oxidative-stress damage caused by reactive species of oxygen and chlorine generated by the host defense mechanisms. MsrPQ is essential for the maintenance of envelope integrity under bleach stress, rescuing a wide series of structurally unrelated periplasmic proteins from methionine oxidation. The catalytic subunit MsrP is non-stereospecific, being able to reduce both (R-) and (S-) diastereoisomers of methionine sulfoxide. The protein is Protein-methionine-sulfoxide reductase catalytic subunit MsrP of Haemophilus ducreyi (strain 35000HP / ATCC 700724).